The chain runs to 617 residues: Protein fem-1 homolog C (617 aa).

At Met1 the chain carries N-acetylmethionine. ANK repeat units lie at residues 2–31, 40–70, 82–111, 115–144, 148–177, 181–210, and 213–242; these read DLKT…KEEV, NGAT…SIEV, EGAP…SVNN, TNST…DLEV, HGHT…DVNR, KGNT…KMEK, and YGMT…TSKT. TPR repeat units lie at residues 245 to 279 and 338 to 371; these read INAL…RYSD and SYYI…QQNN. 2 ANK repeats span residues 481-523 and 527-556; these read NNFS…DVNV and DDNS…HFDA.

The protein belongs to the fem-1 family. As to quaternary structure, component of a CRL2 E3 ubiquitin-protein ligase complex, also named ECS (Elongin BC-CUL2/5-SOCS-box protein) complex, composed of CUL2, Elongin BC (ELOB and ELOC), RBX1 and substrate-specific adapter FEM1C.

The protein operates within protein modification; protein ubiquitination. In terms of biological role, substrate-recognition component of a Cul2-RING (CRL2) E3 ubiquitin-protein ligase complex of the DesCEND (destruction via C-end degrons) pathway, which recognizes a C-degron located at the extreme C terminus of target proteins, leading to their ubiquitination and degradation. The C-degron recognized by the DesCEND pathway is usually a motif of less than ten residues and can be present in full-length proteins, truncated proteins or proteolytically cleaved forms. The CRL2(FEM1C) complex specifically recognizes proteins with an arginine at the C-terminus: recognizes and binds proteins ending with -Lys/Arg-Xaa-Arg and -Lys/Arg-Xaa-Xaa-Arg C-degrons, such as SIL1 or OR51B2, leading to their ubiquitination and degradation. The CRL2(FEM1C) complex mediates ubiquitination and degradation of truncated MSRB1/SEPX1 selenoproteins produced by failed UGA/Sec decoding. This is Protein fem-1 homolog C from Bos taurus (Bovine).